Consider the following 367-residue polypeptide: Aspartate beta-hydroxylase domain-containing protein 1 (367 aa).

Residues 1 to 27 form a disordered region; it reads MWRGSSAGGSQGAAMEGTGGELGGQGN. Residues 1–49 lie on the Cytoplasmic side of the membrane; sequence MWRGSSAGGSQGAAMEGTGGELGGQGNWGLEDAPGLLARASLPIMPAWP. The chain crosses the membrane as a helical span at residues 50–72; it reads LPLASSALTLLLGALTSLFLWYC. Residues 73 to 367 lie on the Lumenal side of the membrane; sequence YRLGSQDMQA…ALDFVFAPDP (295 aa). Positions 88-122 are disordered; that stretch reads RAGAVGGRPGGCSEAGRPSPGRSGESGEGPRTEGL. Position 106 is a phosphoserine (Ser106).

Belongs to the aspartyl/asparaginyl beta-hydroxylase family.

The protein localises to the membrane. This is Aspartate beta-hydroxylase domain-containing protein 1 (ASPHD1) from Bos taurus (Bovine).